A 122-amino-acid chain; its full sequence is Large ribosomal subunit protein uL14c (122 aa).

It belongs to the universal ribosomal protein uL14 family. In terms of assembly, part of the 50S ribosomal subunit.

It localises to the plastid. Its subcellular location is the chloroplast. Binds to 23S rRNA. The protein is Large ribosomal subunit protein uL14c of Fagopyrum esculentum subsp. ancestrale (Wild buckwheat).